The sequence spans 204 residues: uncharacterized protein (204 aa).

Residues 63-83 traverse the membrane as a helical segment; sequence SLLLSMVASVTAAGGNAAIVG.

Its subcellular location is the membrane. This is an uncharacterized protein from Mycobacterium tuberculosis (strain ATCC 25618 / H37Rv).